The chain runs to 73 residues: Dermaseptin-H4 (73 aa).

A signal peptide spans 1–22 (MAFMKKSLFLVLFLGMVSLSIC). The propeptide occupies 23–43 (EEEKRENEDEAKQEDDEQSEM). The interval 25 to 45 (EKRENEDEAKQEDDEQSEMKR) is disordered. Over residues 30–40 (EDEAKQEDDEQ) the composition is skewed to acidic residues. A Leucine amide modification is found at Leu-70. The propeptide occupies 72–73 (EQ).

In terms of tissue distribution, expressed by the skin glands.

It localises to the secreted. In terms of biological role, has antibacterial activity against the Gram-negative bacteria E.coli ATCC 11775 (MIC=0.8 uM), and the Gram-positive bacteria S.aureus ATCC 12600 (MIC=0.4 uM) and M.luteus ATCC 49732 (MIC=0.8 uM). Does not inhibit the growth of the fungus C.albicans. Probably acts by disturbing membrane functions with its amphipathic structure. This chain is Dermaseptin-H4, found in Pithecopus azureus (Orange-legged monkey tree frog).